The primary structure comprises 71 residues: Putative RNA-binding regulatory peptide (71 aa).

In terms of assembly, interacts with IGF2BP1 (via KH3 and KH4 domains); the interaction results in increased binding of IGF2BP1 to N6-methyladenosine (m6A)-containing mRNAs. In terms of tissue distribution, detected in colon (at protein level).

In terms of biological role, enhances binding of IGF2BP1 to N6-methyladenosine (m6A)-containing mRNAs, thereby contributing to increased mRNA stability. Also increases the interaction of IGF2BP1 with RNA stabilizers ELAVL1/HUR, MATR3 and PABPC1, and increases the interaction of RNA stabilizers ELAVL1/HUR, MATR3 and PABPC1 with m6A-containing mRNAs. Contributes to MYC stability by enhancing binding of IGF2BP1 to m6A-containing MYC mRNAs and increasing recruitment of RNA stabilizing proteins to m6A-containing MYC mRNAs. This is Putative RNA-binding regulatory peptide from Homo sapiens (Human).